The primary structure comprises 285 residues: Probable xyloglucan endotransglucosylase/hydrolase protein 12 (285 aa).

Residues 1–25 (MAAFATKQSPLLLASLLILIGVATG) form the signal peptide. A GH16 domain is found at 26-215 (SFYDSFDITW…WTNAPFSASY (190 aa)). The active-site Nucleophile is the Glu101. The active-site Proton donor is the Glu105. Position 105 (Glu105) interacts with xyloglucan. An N-linked (GlcNAc...) asparagine glycan is attached at Asn109. Xyloglucan-binding positions include 118–120 (HTN), 128–130 (NRE), 194–195 (DW), and Gly199. 2 disulfide bridges follow: Cys224–Cys235 and Cys268–Cys282. Arg273 contributes to the xyloglucan binding site.

Belongs to the glycosyl hydrolase 16 family. XTH group 2 subfamily. Contains at least one intrachain disulfide bond essential for its enzymatic activity. As to expression, root specific.

The protein localises to the secreted. Its subcellular location is the cell wall. It localises to the extracellular space. It is found in the apoplast. The catalysed reaction is breaks a beta-(1-&gt;4) bond in the backbone of a xyloglucan and transfers the xyloglucanyl segment on to O-4 of the non-reducing terminal glucose residue of an acceptor, which can be a xyloglucan or an oligosaccharide of xyloglucan.. Catalyzes xyloglucan endohydrolysis (XEH) and/or endotransglycosylation (XET). Cleaves and religates xyloglucan polymers, an essential constituent of the primary cell wall, and thereby participates in cell wall construction of growing tissues. The chain is Probable xyloglucan endotransglucosylase/hydrolase protein 12 (XTH12) from Arabidopsis thaliana (Mouse-ear cress).